A 101-amino-acid chain; its full sequence is Large ribosomal subunit protein uL23 (101 aa).

This sequence belongs to the universal ribosomal protein uL23 family. Part of the 50S ribosomal subunit. Contacts protein L29, and trigger factor when it is bound to the ribosome.

Functionally, one of the early assembly proteins it binds 23S rRNA. One of the proteins that surrounds the polypeptide exit tunnel on the outside of the ribosome. Forms the main docking site for trigger factor binding to the ribosome. In Micrococcus luteus (strain ATCC 4698 / DSM 20030 / JCM 1464 / CCM 169 / CCUG 5858 / IAM 1056 / NBRC 3333 / NCIMB 9278 / NCTC 2665 / VKM Ac-2230) (Micrococcus lysodeikticus), this protein is Large ribosomal subunit protein uL23.